The primary structure comprises 346 residues: uncharacterized protein (346 aa).

A run of 8 helical transmembrane segments spans residues 15–35 (YLRGFALLGIILVNILGLLTV), 55–75 (VEARFYPIFSFLFGVGFYLFI), 93–113 (ILVLFIFGFIHFLFQPGEALT), 139–159 (ILLLFVSIFAAKIFMPLPLIL), 182–202 (IFTFFMFILSVGGLLLQYCYV), 229–249 (LGVATGPILSAFYAGFLLLLL), 269–289 (LTNYISQTALILLAGKLFHLF), and 295–315 (LQSLWLCLAIYVIQLIFSAMW).

This sequence to E.coli YeiB, B.subtilis YxaH and B.subtilis YrkO.

The protein localises to the cell membrane. In terms of biological role, involved in transport. This is an uncharacterized protein from Bacillus acidopullulyticus.